Reading from the N-terminus, the 289-residue chain is Phosphate import ATP-binding protein PstB (289 aa).

The disordered stretch occupies residues M1–P37. An ABC transporter domain is found at A41 to I284. ATP is bound at residue G73–S80.

It belongs to the ABC transporter superfamily. Phosphate importer (TC 3.A.1.7) family. As to quaternary structure, the complex is composed of two ATP-binding proteins (PstB), two transmembrane proteins (PstC and PstA) and a solute-binding protein (PstS).

It is found in the cell inner membrane. It carries out the reaction phosphate(out) + ATP + H2O = ADP + 2 phosphate(in) + H(+). Part of the ABC transporter complex PstSACB involved in phosphate import. Responsible for energy coupling to the transport system. This is Phosphate import ATP-binding protein PstB from Aromatoleum aromaticum (strain DSM 19018 / LMG 30748 / EbN1) (Azoarcus sp. (strain EbN1)).